Consider the following 169-residue polypeptide: UPF0065 protein in clcB-clcD intergenic region (169 aa).

Belongs to the UPF0065 (bug) family.

The protein resides in the periplasm. The sequence is that of UPF0065 protein in clcB-clcD intergenic region from Pseudomonas knackmussii (strain DSM 6978 / CCUG 54928 / LMG 23759 / B13).